The chain runs to 319 residues: Acyl-coenzyme A thioesterase 8 (319 aa).

The segment at 1–20 is disordered; it reads MSSPQAPEDGQGCGDRGDPP. Catalysis depends on charge relay system residues D232, S254, and Q304. Positions 317–319 match the Microbody targeting signal motif; that stretch reads SKL.

This sequence belongs to the C/M/P thioester hydrolase family. In terms of assembly, homodimer. (Microbial infection) Interacts with human immunodeficiency virus (HIV-1) Nef (via middle region); this interaction enhances ACOT8 Acyl-CoA thioesterase activity and occurs in a Nef myristoylation-independent manner. According to a second report, the interaction with HIV-1 Nef occurs in a Nef myristoylation-independent manner but does not enhance ACOT8 Acyl-CoA thioesterase activity. Detected in a T-cell line (at protein level). Ubiquitous.

The protein localises to the peroxisome matrix. The enzyme catalyses choloyl-CoA + H2O = cholate + CoA + H(+). It catalyses the reaction chenodeoxycholoyl-CoA + H2O = chenodeoxycholate + CoA + H(+). It carries out the reaction acetyl-CoA + H2O = acetate + CoA + H(+). The catalysed reaction is butanoyl-CoA + H2O = butanoate + CoA + H(+). The enzyme catalyses 2-methylpropanoyl-CoA + H2O = 2-methylpropanoate + CoA + H(+). It catalyses the reaction hexanoyl-CoA + H2O = hexanoate + CoA + H(+). It carries out the reaction octanoyl-CoA + H2O = octanoate + CoA + H(+). The catalysed reaction is decanoyl-CoA + H2O = decanoate + CoA + H(+). The enzyme catalyses dodecanoyl-CoA + H2O = dodecanoate + CoA + H(+). It catalyses the reaction tetradecanoyl-CoA + H2O = tetradecanoate + CoA + H(+). It carries out the reaction hexadecanoyl-CoA + H2O = hexadecanoate + CoA + H(+). The catalysed reaction is octadecanoyl-CoA + H2O = octadecanoate + CoA + H(+). The enzyme catalyses malonyl-CoA + H2O = malonate + CoA + H(+). It catalyses the reaction acetoacetyl-CoA + H2O = acetoacetate + CoA + H(+). It carries out the reaction propanoyl-CoA + H2O = propanoate + CoA + H(+). The catalysed reaction is succinyl-CoA + H2O = succinate + CoA + H(+). The enzyme catalyses glutaryl-CoA + H2O = glutarate + CoA + H(+). It catalyses the reaction hexanedioyl-CoA + H2O = hexanedioate + CoA + H(+). It carries out the reaction octanedioyl-CoA + H2O = octanedioate + CoA + H(+). The catalysed reaction is decanedioyl-CoA + H2O = decanedioate + CoA + H(+). The enzyme catalyses dodecanedioyl-CoA + H2O = dodecanedioate + CoA + H(+). It catalyses the reaction (9Z)-tetradecenoyl-CoA + H2O = (9Z)-tetradecenoate + CoA + H(+). It carries out the reaction (9Z)-hexadecenoyl-CoA + H2O = (9Z)-hexadecenoate + CoA + H(+). The catalysed reaction is (9Z)-octadecenoyl-CoA + H2O = (9Z)-octadecenoate + CoA + H(+). The enzyme catalyses (9Z,12Z)-octadecadienoyl-CoA + H2O = (9Z,12Z)-octadecadienoate + CoA + H(+). It catalyses the reaction eicosanoyl-CoA + H2O = eicosanoate + CoA + H(+). It carries out the reaction (5Z,8Z,11Z,14Z)-eicosatetraenoyl-CoA + H2O = (5Z,8Z,11Z,14Z)-eicosatetraenoate + CoA + H(+). The catalysed reaction is 4,8-dimethylnonanoyl-CoA + H2O = 4,8-dimethylnonanoate + CoA + H(+). The enzyme catalyses 2,6-dimethylheptanoyl-CoA + H2O = 2,6-dimethylheptanoate + CoA + H(+). It catalyses the reaction (3S)-3-hydroxy-3-methylglutaryl-CoA + H2O = 3-hydroxy-3-methylglutarate + CoA + H(+). It carries out the reaction 3alpha,7alpha,12alpha-trihydroxy-5beta-cholestan-26-oyl-CoA + H2O = 3alpha,7alpha,12alpha-trihydroxy-5beta-cholestan-26-oate + CoA + H(+). The catalysed reaction is 2-methyloctadecanoyl-CoA + H2O = 2-methyloctadecanoate + CoA + H(+). The enzyme catalyses prostaglandin F2alpha-CoA + H2O = prostaglandin F2alpha + CoA + H(+). It functions in the pathway lipid metabolism; fatty acid metabolism. With respect to regulation, inhibited by CoASH (IC(50)=10-15 uM). Also inhibited by cysteine-reactive agents. Its function is as follows. Catalyzes the hydrolysis of acyl-CoAs into free fatty acids and coenzyme A (CoASH), regulating their respective intracellular levels. Displays no strong substrate specificity with respect to the carboxylic acid moiety of Acyl-CoAs. Hydrolyzes medium length (C2 to C20) straight-chain, saturated and unsaturated acyl-CoAS but is inactive towards substrates with longer aliphatic chains. Moreover, it catalyzes the hydrolysis of CoA esters of bile acids, such as choloyl-CoA and chenodeoxycholoyl-CoA and competes with bile acid CoA:amino acid N-acyltransferase (BAAT). Is also able to hydrolyze CoA esters of dicarboxylic acids. It is involved in the metabolic regulation of peroxisome proliferation. In terms of biological role, (Microbial infection) May mediate Nef-induced down-regulation of CD4 cell-surface expression. The sequence is that of Acyl-coenzyme A thioesterase 8 (ACOT8) from Homo sapiens (Human).